Reading from the N-terminus, the 275-residue chain is Light-independent protochlorophyllide reductase iron-sulfur ATP-binding protein (275 aa).

Residues 10–15 (GIGKST) and K39 each bind ATP. S14 contributes to the Mg(2+) binding site. Residues C95 and C129 each contribute to the [4Fe-4S] cluster site. Residue 180–181 (NR) participates in ATP binding.

Belongs to the NifH/BchL/ChlL family. As to quaternary structure, homodimer. Protochlorophyllide reductase is composed of three subunits; ChlL, ChlN and ChlB. [4Fe-4S] cluster serves as cofactor.

The enzyme catalyses chlorophyllide a + oxidized 2[4Fe-4S]-[ferredoxin] + 2 ADP + 2 phosphate = protochlorophyllide a + reduced 2[4Fe-4S]-[ferredoxin] + 2 ATP + 2 H2O. It functions in the pathway porphyrin-containing compound metabolism; chlorophyll biosynthesis (light-independent). Component of the dark-operative protochlorophyllide reductase (DPOR) that uses Mg-ATP and reduced ferredoxin to reduce ring D of protochlorophyllide (Pchlide) to form chlorophyllide a (Chlide). This reaction is light-independent. The L component serves as a unique electron donor to the NB-component of the complex, and binds Mg-ATP. This is Light-independent protochlorophyllide reductase iron-sulfur ATP-binding protein from Gloeobacter violaceus (strain ATCC 29082 / PCC 7421).